Consider the following 288-residue polypeptide: uncharacterized protein (288 aa).

2 disordered regions span residues 31–52 and 179–288; these read KAVD…EAPS and YPSK…VELK. Polar residues predominate over residues 206–217; the sequence is RPSSPTNFSKLI. Basic and acidic residues predominate over residues 221–236; it reads YKDEWLQQQADSDKRA. Low complexity-rich tracts occupy residues 237-249 and 267-276; these read PQTP…SPSP and AAESSPLSSA.

This is an uncharacterized protein from Bos taurus (Bovine).